A 724-amino-acid chain; its full sequence is 1,4-alpha-glucan branching enzyme GlgB 1 (724 aa).

Asp403 (nucleophile) is an active-site residue. Catalysis depends on Glu456, which acts as the Proton donor.

It belongs to the glycosyl hydrolase 13 family. GlgB subfamily. Monomer.

The enzyme catalyses Transfers a segment of a (1-&gt;4)-alpha-D-glucan chain to a primary hydroxy group in a similar glucan chain.. Its pathway is glycan biosynthesis; glycogen biosynthesis. Catalyzes the formation of the alpha-1,6-glucosidic linkages in glycogen by scission of a 1,4-alpha-linked oligosaccharide from growing alpha-1,4-glucan chains and the subsequent attachment of the oligosaccharide to the alpha-1,6 position. The protein is 1,4-alpha-glucan branching enzyme GlgB 1 (glgB1) of Xanthomonas axonopodis pv. citri (strain 306).